Here is a 360-residue protein sequence, read N- to C-terminus: DNA replication and repair protein RecF (360 aa).

33-40 (GENGSGKT) is an ATP binding site.

It belongs to the RecF family.

The protein localises to the cytoplasm. Its function is as follows. The RecF protein is involved in DNA metabolism; it is required for DNA replication and normal SOS inducibility. RecF binds preferentially to single-stranded, linear DNA. It also seems to bind ATP. In Rickettsia canadensis (strain McKiel), this protein is DNA replication and repair protein RecF.